Reading from the N-terminus, the 182-residue chain is Ribosome-recycling factor (182 aa).

Positions 136 to 160 (VKKSEKDGDLSEDQSRDEQETIQKE) are disordered.

The protein belongs to the RRF family.

It is found in the cytoplasm. Responsible for the release of ribosomes from messenger RNA at the termination of protein biosynthesis. May increase the efficiency of translation by recycling ribosomes from one round of translation to another. In Prochlorococcus marinus (strain NATL2A), this protein is Ribosome-recycling factor.